We begin with the raw amino-acid sequence, 505 residues long: 4-alpha-glucanotransferase (505 aa).

It belongs to the disproportionating enzyme family.

It localises to the cytoplasm. The enzyme catalyses Transfers a segment of a (1-&gt;4)-alpha-D-glucan to a new position in an acceptor, which may be glucose or a (1-&gt;4)-alpha-D-glucan.. This chain is 4-alpha-glucanotransferase (malQ), found in Synechocystis sp. (strain ATCC 27184 / PCC 6803 / Kazusa).